Consider the following 202-residue polypeptide: LexA repressor (202 aa).

Residues 28–48 (RAEIAQRLGFRSPNAAEEHLK) constitute a DNA-binding region (H-T-H motif). Catalysis depends on for autocatalytic cleavage activity residues Ser119 and Lys156.

Belongs to the peptidase S24 family. As to quaternary structure, homodimer.

It catalyses the reaction Hydrolysis of Ala-|-Gly bond in repressor LexA.. Its function is as follows. Represses a number of genes involved in the response to DNA damage (SOS response), including recA and lexA. Binds to the 16 bp palindromic sequence 5'-CTGTATATATATACAG-3'. In the presence of single-stranded DNA, RecA interacts with LexA causing an autocatalytic cleavage which disrupts the DNA-binding part of LexA, leading to derepression of the SOS regulon and eventually DNA repair. The sequence is that of LexA repressor from Escherichia coli (strain K12 / MC4100 / BW2952).